The sequence spans 161 residues: Putative 4-hydroxy-4-methyl-2-oxoglutarate aldolase (161 aa).

Substrate contacts are provided by residues 75–78 (GDNL) and arginine 97. Aspartate 98 lines the a divalent metal cation pocket.

This sequence belongs to the class II aldolase/RraA-like family. In terms of assembly, homotrimer. It depends on a divalent metal cation as a cofactor.

The enzyme catalyses 4-hydroxy-4-methyl-2-oxoglutarate = 2 pyruvate. The catalysed reaction is oxaloacetate + H(+) = pyruvate + CO2. Functionally, catalyzes the aldol cleavage of 4-hydroxy-4-methyl-2-oxoglutarate (HMG) into 2 molecules of pyruvate. Also contains a secondary oxaloacetate (OAA) decarboxylase activity due to the common pyruvate enolate transition state formed following C-C bond cleavage in the retro-aldol and decarboxylation reactions. The polypeptide is Putative 4-hydroxy-4-methyl-2-oxoglutarate aldolase (Alkalilimnicola ehrlichii (strain ATCC BAA-1101 / DSM 17681 / MLHE-1)).